Consider the following 321-residue polypeptide: Nucleotide-binding protein GOX0815 (321 aa).

27-34 (GLSGAGKS) serves as a coordination point for ATP. GTP is bound at residue 72–75 (DVRS).

The protein belongs to the RapZ-like family.

Its function is as follows. Displays ATPase and GTPase activities. The chain is Nucleotide-binding protein GOX0815 from Gluconobacter oxydans (strain 621H) (Gluconobacter suboxydans).